Reading from the N-terminus, the 77-residue chain is Small integral membrane protein 5 (77 aa).

The helical transmembrane segment at 32 to 52 threads the bilayer; the sequence is IVAFSVIILFTATVLLLLLIA.

It is found in the membrane. This is Small integral membrane protein 5 (SMIM5) from Homo sapiens (Human).